A 422-amino-acid chain; its full sequence is Histidine--tRNA ligase (422 aa).

Belongs to the class-II aminoacyl-tRNA synthetase family. As to quaternary structure, homodimer.

It is found in the cytoplasm. The catalysed reaction is tRNA(His) + L-histidine + ATP = L-histidyl-tRNA(His) + AMP + diphosphate + H(+). This chain is Histidine--tRNA ligase, found in Vibrio cholerae serotype O1 (strain ATCC 39541 / Classical Ogawa 395 / O395).